Consider the following 425-residue polypeptide: Enolase (425 aa).

Glutamine 161 lines the (2R)-2-phosphoglycerate pocket. The active-site Proton donor is glutamate 203. Mg(2+)-binding residues include aspartate 240, glutamate 283, and aspartate 310. Residues lysine 335, arginine 364, serine 365, and lysine 386 each coordinate (2R)-2-phosphoglycerate. Residue lysine 335 is the Proton acceptor of the active site.

It belongs to the enolase family. As to quaternary structure, component of the RNA degradosome, a multiprotein complex involved in RNA processing and mRNA degradation. Mg(2+) is required as a cofactor.

It is found in the cytoplasm. The protein resides in the secreted. Its subcellular location is the cell surface. It carries out the reaction (2R)-2-phosphoglycerate = phosphoenolpyruvate + H2O. It functions in the pathway carbohydrate degradation; glycolysis; pyruvate from D-glyceraldehyde 3-phosphate: step 4/5. Functionally, catalyzes the reversible conversion of 2-phosphoglycerate (2-PG) into phosphoenolpyruvate (PEP). It is essential for the degradation of carbohydrates via glycolysis. This Ruthia magnifica subsp. Calyptogena magnifica protein is Enolase.